A 682-amino-acid chain; its full sequence is Acyl-CoA synthetase short-chain family member 3, mitochondrial (682 aa).

Residues 1–29 (MKPSWLQCRKVTGAGTLGAPLPGSPSVRG) constitute a mitochondrion transit peptide. Residue 222–225 (EPGR) coordinates CoA. ATP contacts are provided by residues 420–422 (GER) and 441–446 (DHWWQT). Position 513 is an N6-succinyllysine (K513). An N6-acetyllysine modification is found at K519. ATP contacts are provided by D534, R549, and R560. R619 is a CoA binding site.

This sequence belongs to the ATP-dependent AMP-binding enzyme family.

The protein localises to the mitochondrion matrix. The catalysed reaction is acetate + ATP + CoA = acetyl-CoA + AMP + diphosphate. It catalyses the reaction propanoate + ATP + CoA = propanoyl-CoA + AMP + diphosphate. It carries out the reaction butanoate + ATP + CoA = butanoyl-CoA + AMP + diphosphate. Functionally, catalyzes the synthesis of acetyl-CoA from short-chain fatty acids. Propionate is the preferred substrate but can also utilize acetate and butyrate with a much lower affinity. The chain is Acyl-CoA synthetase short-chain family member 3, mitochondrial (Acss3) from Mus musculus (Mouse).